Consider the following 584-residue polypeptide: UBX domain-containing protein 2 (584 aa).

Residues 1 to 80 are Cytoplasmic-facing; sequence MPVVNHEDSE…PTQTSTPMAE (80 aa). Residues 81–101 traverse the membrane as a helical segment; it reads TLVPPALGPRPLLFTASLPVV. Residues 102 to 151 are Lumenal-facing; the sequence is RPLPANFRNDFRTIGLNGRSNTVWSMFESFSYDGNPFLFILLLIPRIINR. The chain crosses the membrane as a helical span at residues 152–172; it reads LSATIFTFFCTLLSLHSISGG. Residues 173 to 584 are Cytoplasmic-facing; that stretch reads GNSGKPKISK…DEEDEENEEQ (412 aa). Positions 426-570 constitute a UBX domain; that stretch reads ETTGKQATLQ…WPNGSLLVEA (145 aa).

In terms of assembly, component of the DOA10 ubiquitin ligase complex which contains E3 ligase SSM4/DOA10 and CDC48-binding protein UBX2/SEL1. Component of the HRD1 ubiquitin ligase complex which contains the E3 ligase HRD1, its cofactors HRD3, USA1 and DER1, substrate recruiting factor YOS9 and UBX2. In ERAD-L, HRD3 and YOS9 jointly bind misfolded glycoproteins in the endoplasmic reticulum (ER) lumen. Movement of ERAD-L substrates through the ER membrane is facilitated by HRD1 and DER1 which have lateral gates facing each other and which distort the membrane region between the lateral gates, making it much thinner than a normal phospholipid bilayer. Substrates insert into the membrane as a hairpin loop with one strand interacting with DER1 and the other with HRD1. Both the DOA10 and HRD1 ubiquitin ligase complexes interact with the heterotrimeric CDC48-NPL4-UFD1 ATPase complex which is recruited by UBX2 via its interaction with CDC48 and which moves ubiquitinated substrates to the cytosol for targeting to the proteasome.

The protein localises to the endoplasmic reticulum membrane. Integral endoplasmic reticulum membrane protein that coordinates the assembly of the ER-associated protein degradation (ERAD) machinery at the ER membrane. Mediates binding of CDC48 to the E3 ubiquitin ligases SSM4/DOA10 and HRD1, and to ERAD substrates. Component of the DOA10 ubiquitin ligase complex, which is part of the ERAD-C pathway responsible for the rapid degradation of membrane proteins with misfolded cytoplasmic domains. ERAD-C substrates are ubiquitinated through DOA10 in conjunction with the E2 ubiquitin-conjugating enzymes UBC6 and UBC7-CUE1. Also a component of the HRD1 ubiquitin ligase complex, which is part of the ERAD-L and ERAD-M pathways responsible for the rapid degradation of soluble lumenal and membrane proteins with misfolded lumenal domains (ERAD-L), or ER-membrane proteins with misfolded transmembrane domains (ERAD-M). ERAD-L substrates are ubiquitinated through HRD1 in conjunction with the E2 ubiquitin-conjugating enzymes UBC1 and UBC7-CUE1. Ubiquitinated substrates are then removed to the cytosol via the action of the CDC48-NPL4-UFD1 ATPase complex and targeted to the proteasome. The protein is UBX domain-containing protein 2 (UBX2) of Saccharomyces cerevisiae (strain ATCC 204508 / S288c) (Baker's yeast).